The chain runs to 615 residues: MRLSFGKQRYHGGTTVTLTEQGASDSLRAAQAIFQNHSNEVSSPCPPVTVSRNPQTRLSEPSLQKSGRKQEQKKARIRTKQVPKIKTTAPNDVELSKKHRSSPAGKDNVSSTAQMAAALAHSQSKLSSDNNSSHSSALDTLKVLETPNLNGLLGIHSRSSSRNGSNESLTPGQRTPDNRSQENLLTSFSSGRRLSSSSMEPATNKDSNKALPKRRPSPPLQSSLVGSGQLHENENLSSISIDSRHSLNPDTSDVISNRSQTSLSQTINQLSLCESEPSIASSNTTTTTSNQGSGLPNLVPNYSSDMRKKKLVNKFKRKVFGSKPKHLSSQYEMDASSEELGQHEQQPSMRFKTTLRKTSVSTNAENDHASSLHEGNLRYKYNPSNDTYDVYDDTDSDSESDQNQDALTKPRKRDRIKRKIRNSANKTAHHRPIHRTRDRKFNEDKPWKSHTDITFVTDNERKRYESMWVSNRHRHLNLLSWWPSLTGDSGAINTLPEDGLILGIIVRDIWKRSNLPNSLLAEIYTKVDTRKDGTLDRKSFIVGMWLVDQCLYGRKLPNVVEQCVWDSVDRYASTMVVPVSTLKAMAKQKRKQMKEEIKNIKKENRVVLVDHNSSS.

Disordered regions lie at residues 38–135 (SNEV…SSHS), 152–260 (LLGI…NRSQ), 277–304 (PSIASSNTTTTTSNQGSGLPNLVPNYSS), and 323–445 (KPKH…NEDK). Residues 50-65 (VSRNPQTRLSEPSLQK) show a composition bias toward polar residues. 2 stretches are compositionally biased toward low complexity: residues 121-135 (HSQSKLSSDNNSSHS) and 157-168 (SRSSSRNGSNES). Residue S180 is modified to Phosphoserine. Positions 184 to 198 (LLTSFSSGRRLSSSS) are enriched in low complexity. The segment covering 248–260 (NPDTSDVISNRSQ) has biased composition (polar residues). Residues 281 to 290 (SSNTTTTTSN) are compositionally biased toward low complexity. Residues 365–377 (ENDHASSLHEGNL) show a composition bias toward basic and acidic residues. The segment covering 389–402 (DVYDDTDSDSESDQ) has biased composition (acidic residues). The segment covering 409–438 (KPRKRDRIKRKIRNSANKTAHHRPIHRTRD) has biased composition (basic residues). The EH domain maps to 460 to 571 (ERKRYESMWV…QCVWDSVDRY (112 aa)).

Belongs to the IRS4 family. Interacts with INP51.

Its function is as follows. With TAX4, acts as a positive regulator of INP51 activity and phosphatidylinositol 4,5-bisphosphate turnover. Negatively regulates signaling through the cell integrity pathway, including the MAP kinase SLT2. Also seems to be involved in rDNA silencing. The sequence is that of Increased rDNA silencing protein 4 (IRS4) from Saccharomyces cerevisiae (strain YJM789) (Baker's yeast).